Consider the following 1127-residue polypeptide: Glutamate receptor-interacting protein 1 (1127 aa).

Q11 carries S-palmitoyl cysteine lipidation. A Phosphoserine modification is found at S43. 6 PDZ domains span residues 53 to 136 (VVEL…EYEL), 150 to 238 (TVEV…EYDV), 252 to 336 (LVEV…LPHH), 471 to 560 (EVVL…EFDV), 572 to 657 (HVKL…RKDE), and 672 to 754 (TVEL…KKQT). 3 disordered regions span residues 752–802 (KQTD…PSVD), 840–865 (KQRT…SNED), and 942–980 (MARS…GRKS). Composition is skewed to polar residues over residues 840–856 (KQRT…SQTY) and 947–973 (LGRQ…NTLP). One can recognise a PDZ 7 domain in the interval 1003–1085 (KVTLYKDSGM…KLDLVISRNP (83 aa)). The interval 1108 to 1127 (FFQQPSHGGNLETREPTNTL) is disordered.

As to quaternary structure, interacts with EFNB3, GRIA2, GRIA3, GRIPAP1/GRASP1, PPFIA1, PPFIA4, FRAS1, PTPRF, liprins-alpha and the C-terminal tail of PRLHR. Can form homomultimers or heteromultimers with GRIP2. Interacts with EFNB1, EPHA7, EPHB2, KIF5A, KIF5B and KIF5C. Forms a ternary complex with GRIA2 and CSPG4. Interacts with ATAD1 in an ATP-dependent manner. ATAD1-catalyzed ATP hydrolysis disrupts binding to ATAD1 and to GRIA2 and leads to AMPAR complex disassembly. Interacts with SLC30A9 and PLCD4. Interacts with BUD23. Forms a complex with NSG1, GRIA2 and STX12; controls the intracellular fate of AMPAR and the endosomal sorting of the GRIA2 subunit toward recycling and membrane targeting. Interacts with NSG1. In terms of processing, palmitoylation of isoform 2. In terms of tissue distribution, expressed in brain. Isoform 2 is the major isoform in brain. Expressed in oligodendrocyte lineage cells.

Its subcellular location is the membrane. It localises to the cytoplasmic vesicle. The protein localises to the perikaryon. The protein resides in the cell projection. It is found in the dendrite. Its subcellular location is the cytoplasm. It localises to the endomembrane system. The protein localises to the postsynaptic cell membrane. The protein resides in the postsynaptic density. It is found in the endoplasmic reticulum membrane. May play a role as a localized scaffold for the assembly of a multiprotein signaling complex and as mediator of the trafficking of its binding partners at specific subcellular location in neurons. Through complex formation with NSG1, GRIA2 and STX12 controls the intracellular fate of AMPAR and the endosomal sorting of the GRIA2 subunit toward recycling and membrane targeting. The polypeptide is Glutamate receptor-interacting protein 1 (Grip1) (Mus musculus (Mouse)).